The primary structure comprises 293 residues: ATP synthase gamma chain (293 aa).

This sequence belongs to the ATPase gamma chain family. F-type ATPases have 2 components, CF(1) - the catalytic core - and CF(0) - the membrane proton channel. CF(1) has five subunits: alpha(3), beta(3), gamma(1), delta(1), epsilon(1). CF(0) has three main subunits: a, b and c.

It localises to the cell membrane. Produces ATP from ADP in the presence of a proton gradient across the membrane. The gamma chain is believed to be important in regulating ATPase activity and the flow of protons through the CF(0) complex. This chain is ATP synthase gamma chain, found in Streptococcus agalactiae serotype III (strain NEM316).